The sequence spans 89 residues: MAHTKKGGSSRNGRDSESKRLGVKKFGGEAVLAGNIIVRQRGTKWHPGANVGLGKDHTIFATVNGSVSFRTKANGRTYVSVNPIAEAAE.

A disordered region spans residues 1–22 (MAHTKKGGSSRNGRDSESKRLG).

The protein belongs to the bacterial ribosomal protein bL27 family.

The sequence is that of Large ribosomal subunit protein bL27 from Brucella melitensis biotype 1 (strain ATCC 23456 / CCUG 17765 / NCTC 10094 / 16M).